Here is a 184-residue protein sequence, read N- to C-terminus: Shikimate kinase (184 aa).

An ATP-binding site is contributed by 17 to 22 (GAGKTT). Threonine 21 lines the Mg(2+) pocket. Substrate contacts are provided by aspartate 39, arginine 63, and glycine 85. Arginine 123 is an ATP binding site. A substrate-binding site is contributed by arginine 142.

It belongs to the shikimate kinase family. As to quaternary structure, monomer. The cofactor is Mg(2+).

It localises to the cytoplasm. It catalyses the reaction shikimate + ATP = 3-phosphoshikimate + ADP + H(+). It participates in metabolic intermediate biosynthesis; chorismate biosynthesis; chorismate from D-erythrose 4-phosphate and phosphoenolpyruvate: step 5/7. In terms of biological role, catalyzes the specific phosphorylation of the 3-hydroxyl group of shikimic acid using ATP as a cosubstrate. This chain is Shikimate kinase, found in Burkholderia lata (strain ATCC 17760 / DSM 23089 / LMG 22485 / NCIMB 9086 / R18194 / 383).